A 335-amino-acid chain; its full sequence is Holliday junction branch migration complex subunit RuvB (335 aa).

The segment at 4–184 (ADRLVSAEVL…FGIVQRLEFY (181 aa)) is large ATPase domain (RuvB-L). ATP is bound by residues I23, R24, G65, K68, T69, T70, 131-133 (EDY), R174, Y184, and R221. T69 is a Mg(2+) binding site. Positions 185 to 255 (NVDDLQSIVS…IATRALDMLS (71 aa)) are small ATPAse domain (RuvB-S). A head domain (RuvB-H) region spans residues 258–335 (AAGFDYLDRK…RHFGMVRNQE (78 aa)). R294, R313, and R318 together coordinate DNA.

This sequence belongs to the RuvB family. Homohexamer. Forms an RuvA(8)-RuvB(12)-Holliday junction (HJ) complex. HJ DNA is sandwiched between 2 RuvA tetramers; dsDNA enters through RuvA and exits via RuvB. An RuvB hexamer assembles on each DNA strand where it exits the tetramer. Each RuvB hexamer is contacted by two RuvA subunits (via domain III) on 2 adjacent RuvB subunits; this complex drives branch migration. In the full resolvosome a probable DNA-RuvA(4)-RuvB(12)-RuvC(2) complex forms which resolves the HJ.

The protein localises to the cytoplasm. It carries out the reaction ATP + H2O = ADP + phosphate + H(+). Functionally, the RuvA-RuvB-RuvC complex processes Holliday junction (HJ) DNA during genetic recombination and DNA repair, while the RuvA-RuvB complex plays an important role in the rescue of blocked DNA replication forks via replication fork reversal (RFR). RuvA specifically binds to HJ cruciform DNA, conferring on it an open structure. The RuvB hexamer acts as an ATP-dependent pump, pulling dsDNA into and through the RuvAB complex. RuvB forms 2 homohexamers on either side of HJ DNA bound by 1 or 2 RuvA tetramers; 4 subunits per hexamer contact DNA at a time. Coordinated motions by a converter formed by DNA-disengaged RuvB subunits stimulates ATP hydrolysis and nucleotide exchange. Immobilization of the converter enables RuvB to convert the ATP-contained energy into a lever motion, pulling 2 nucleotides of DNA out of the RuvA tetramer per ATP hydrolyzed, thus driving DNA branch migration. The RuvB motors rotate together with the DNA substrate, which together with the progressing nucleotide cycle form the mechanistic basis for DNA recombination by continuous HJ branch migration. Branch migration allows RuvC to scan DNA until it finds its consensus sequence, where it cleaves and resolves cruciform DNA. In Photorhabdus laumondii subsp. laumondii (strain DSM 15139 / CIP 105565 / TT01) (Photorhabdus luminescens subsp. laumondii), this protein is Holliday junction branch migration complex subunit RuvB.